Here is an 861-residue protein sequence, read N- to C-terminus: Leucine--tRNA ligase (861 aa).

A 'HIGH' region motif is present at residues 42 to 52 (PYPSGRIHMGH). The short motif at 623-627 (KMSKS) is the 'KMSKS' region element. Position 626 (Lys-626) interacts with ATP.

This sequence belongs to the class-I aminoacyl-tRNA synthetase family.

It localises to the cytoplasm. It carries out the reaction tRNA(Leu) + L-leucine + ATP = L-leucyl-tRNA(Leu) + AMP + diphosphate. This Caulobacter vibrioides (strain ATCC 19089 / CIP 103742 / CB 15) (Caulobacter crescentus) protein is Leucine--tRNA ligase.